The primary structure comprises 329 residues: 4-hydroxythreonine-4-phosphate dehydrogenase (329 aa).

2 residues coordinate substrate: His-136 and Thr-137. Positions 166, 211, and 266 each coordinate a divalent metal cation. Positions 274, 283, and 292 each coordinate substrate.

The protein belongs to the PdxA family. Homodimer. Requires Zn(2+) as cofactor. Mg(2+) is required as a cofactor. Co(2+) serves as cofactor.

The protein localises to the cytoplasm. It catalyses the reaction 4-(phosphooxy)-L-threonine + NAD(+) = 3-amino-2-oxopropyl phosphate + CO2 + NADH. It participates in cofactor biosynthesis; pyridoxine 5'-phosphate biosynthesis; pyridoxine 5'-phosphate from D-erythrose 4-phosphate: step 4/5. In terms of biological role, catalyzes the NAD(P)-dependent oxidation of 4-(phosphooxy)-L-threonine (HTP) into 2-amino-3-oxo-4-(phosphooxy)butyric acid which spontaneously decarboxylates to form 3-amino-2-oxopropyl phosphate (AHAP). This chain is 4-hydroxythreonine-4-phosphate dehydrogenase, found in Escherichia coli O81 (strain ED1a).